Reading from the N-terminus, the 65-residue chain is UPF0434 protein VFMJ11_A0475 (65 aa).

The protein belongs to the UPF0434 family.

This chain is UPF0434 protein VFMJ11_A0475, found in Aliivibrio fischeri (strain MJ11) (Vibrio fischeri).